A 279-amino-acid polypeptide reads, in one-letter code: MSRISTLFGKLLQNRRKALIPFITAGDPEPGMMVPLMHELVQAGADVIELGVPFSDPMADGPTIQRSSERALKHRVSLQDVLAMVGEFRESDSSTPVVLMGYANPVEAMGYDAFTARSKACGVDGVLIVDYPPEESVKWVEYLKRQNIAPIFLLSPTTPQQRVERVASLAEGYVYYVSLKGVTGSLHLDLHDVAEKLDGLRSRISIPIGVGFGIRDGATARAVAELADAVVVGSRIIEEIERSPKAEVLTNVHRLVKSLRIAIDAASPAPSAAVKLTHL.

Catalysis depends on proton acceptor residues Glu-49 and Asp-60.

The protein belongs to the TrpA family. Tetramer of two alpha and two beta chains.

The catalysed reaction is (1S,2R)-1-C-(indol-3-yl)glycerol 3-phosphate + L-serine = D-glyceraldehyde 3-phosphate + L-tryptophan + H2O. Its pathway is amino-acid biosynthesis; L-tryptophan biosynthesis; L-tryptophan from chorismate: step 5/5. Its function is as follows. The alpha subunit is responsible for the aldol cleavage of indoleglycerol phosphate to indole and glyceraldehyde 3-phosphate. The sequence is that of Tryptophan synthase alpha chain from Nitrosospira multiformis (strain ATCC 25196 / NCIMB 11849 / C 71).